Consider the following 498-residue polypeptide: Glycerol kinase (498 aa).

T12 is a binding site for ADP. ATP contacts are provided by T12, T13, and S14. T12 is a binding site for sn-glycerol 3-phosphate. Residue R16 coordinates ADP. Residues R82, E83, Y134, and D243 each coordinate sn-glycerol 3-phosphate. Residues R82, E83, Y134, D243, and Q244 each contribute to the glycerol site. Residues T265 and G308 each coordinate ADP. Residues T265, G308, Q312, and G409 each coordinate ATP. Positions 409 and 413 each coordinate ADP.

Belongs to the FGGY kinase family. Homotetramer and homodimer (in equilibrium).

It carries out the reaction glycerol + ATP = sn-glycerol 3-phosphate + ADP + H(+). It functions in the pathway polyol metabolism; glycerol degradation via glycerol kinase pathway; sn-glycerol 3-phosphate from glycerol: step 1/1. Its activity is regulated as follows. Activated by phosphorylation and inhibited by fructose 1,6-bisphosphate (FBP). In terms of biological role, key enzyme in the regulation of glycerol uptake and metabolism. Catalyzes the phosphorylation of glycerol to yield sn-glycerol 3-phosphate. The sequence is that of Glycerol kinase from Clostridium botulinum (strain 657 / Type Ba4).